Reading from the N-terminus, the 394-residue chain is NAD(P)H-quinone oxidoreductase subunit H (394 aa).

It belongs to the complex I 49 kDa subunit family. In terms of assembly, NDH-1 can be composed of about 15 different subunits; different subcomplexes with different compositions have been identified which probably have different functions.

The protein resides in the cellular thylakoid membrane. The catalysed reaction is a plastoquinone + NADH + (n+1) H(+)(in) = a plastoquinol + NAD(+) + n H(+)(out). It catalyses the reaction a plastoquinone + NADPH + (n+1) H(+)(in) = a plastoquinol + NADP(+) + n H(+)(out). In terms of biological role, NDH-1 shuttles electrons from an unknown electron donor, via FMN and iron-sulfur (Fe-S) centers, to quinones in the respiratory and/or the photosynthetic chain. The immediate electron acceptor for the enzyme in this species is believed to be plastoquinone. Couples the redox reaction to proton translocation, and thus conserves the redox energy in a proton gradient. Cyanobacterial NDH-1 also plays a role in inorganic carbon-concentration. The sequence is that of NAD(P)H-quinone oxidoreductase subunit H from Trichodesmium erythraeum (strain IMS101).